We begin with the raw amino-acid sequence, 288 residues long: Pantothenate synthetase (288 aa).

Residue 30–37 (MGALHEGH) coordinates ATP. Catalysis depends on His-37, which acts as the Proton donor. (R)-pantoate is bound at residue Gln-61. Gln-61 is a binding site for beta-alanine. ATP is bound at residue 147–150 (GEKD). Position 153 (Gln-153) interacts with (R)-pantoate. ATP-binding positions include Val-176 and 184–187 (ISSR).

This sequence belongs to the pantothenate synthetase family. Homodimer.

It is found in the cytoplasm. It catalyses the reaction (R)-pantoate + beta-alanine + ATP = (R)-pantothenate + AMP + diphosphate + H(+). The protein operates within cofactor biosynthesis; (R)-pantothenate biosynthesis; (R)-pantothenate from (R)-pantoate and beta-alanine: step 1/1. Catalyzes the condensation of pantoate with beta-alanine in an ATP-dependent reaction via a pantoyl-adenylate intermediate. The chain is Pantothenate synthetase from Chlorobium phaeobacteroides (strain BS1).